A 454-amino-acid polypeptide reads, in one-letter code: Zinc finger protein 474 (454 aa).

The tract at residues 48–85 (RGEKIKTNPRKNRPGTVILSKQSSRRIMSGSQPRPPVI) is disordered. Positions 66–79 (LSKQSSRRIMSGSQ) are enriched in polar residues. Residues 91–120 (GFRVCYICGREFGSQSLGIHEPQCLEKWRV) form a C2HC/C3H-type 1 zinc finger. Residues C95, C98, H110, and C114 each coordinate Zn(2+). A disordered region spans residues 125-146 (LPKHLRRPEPSKPPPFSGSGSY). 5 C2HC/C3H-type zinc fingers span residues 162–191 (QLLP…KVEG), 218–247 (RTVI…KWKV), 281–310 (QLVS…QPSG), 352–381 (PTIV…KWHN), and 425–454 (QLVP…KVAK). 8 residues coordinate Zn(2+): C166, C169, H181, C185, C222, C225, H237, and C241. The tract at residues 256–282 (FRQPLPQKPQPLLTGQPKHAGPRQGQL) is disordered. Positions 285, 288, 300, 304, 356, 359, 371, 375, 429, 432, 444, and 448 each coordinate Zn(2+). A disordered region spans residues 299–345 (VHQRSCKAQPSGPKVQDLTLGSRGGLKESTNPKPQRNMAAPPVTDKP).

Zn(2+) is required as a cofactor.

This Bos taurus (Bovine) protein is Zinc finger protein 474 (ZNF474).